Consider the following 187-residue polypeptide: uncharacterized protein (187 aa).

Positions methionine 1–alanine 25 are cleaved as a signal peptide.

It belongs to the fimbrial protein family.

Part of the yfcOPQRSUV fimbrial operon. Could contribute to adhesion to various surfaces in specific environmental niches. Increases adhesion to eukaryotic T24 bladder epithelial cells in the absence of fim genes. This is an uncharacterized protein from Escherichia coli (strain K12).